The following is a 449-amino-acid chain: Nucleoprotein (449 aa).

The segment at M1–S55 is disordered. Positions S9–G22 are enriched in low complexity. Polar residues-rich tracts occupy residues Q29–T38 and S45–S55. The interval Q52–S194 is RNA-binding. The region spanning P61 to G190 is the CoV N NTD domain. The RNA site is built by R106, R122, and R164. Disordered stretches follow at residues P158 to D231, I266 to G297, and M387 to I449. S167 is modified (phosphoserine; by host). T174 carries the phosphothreonine; by host modification. A Phosphoserine; by host modification is found at S191. 2 stretches are compositionally biased toward polar residues: residues S194–A204 and G212–G227. The CoV N CTD domain occupies A259–E384. The span at I266–P276 shows a compositional bias: basic residues. Residues I266 to D385 are dimerization. The residue at position 391 (S391) is a Phosphoserine; by host. A compositionally biased stretch (polar residues) spans Q400–I410. Positions K423–E440 are enriched in basic and acidic residues. The residue at position 424 (S424) is a Phosphoserine; by host. T428 is subject to Phosphothreonine; by host.

Belongs to the betacoronavirus nucleocapsid protein family. In terms of assembly, homooligomer. Both monomeric and oligomeric forms interact with RNA. Interacts with protein M. Interacts with NSP3; this interaction serves to tether the genome to the newly translated replicase-transcriptase complex at a very early stage of infection. ADP-ribosylated. The ADP-ribosylation is retained in the virion during infection. In terms of processing, phosphorylated on serine and threonine residues.

The protein localises to the virion. It localises to the host endoplasmic reticulum-Golgi intermediate compartment. Its subcellular location is the host Golgi apparatus. In terms of biological role, packages the positive strand viral genome RNA into a helical ribonucleocapsid (RNP) and plays a fundamental role during virion assembly through its interactions with the viral genome and membrane protein M. Plays an important role in enhancing the efficiency of subgenomic viral RNA transcription as well as viral replication. This Sus scrofa (Pig) protein is Nucleoprotein.